A 333-amino-acid polypeptide reads, in one-letter code: Biotin synthase (333 aa).

The region spanning 47–276 is the Radical SAM core domain; sequence YYGKKVKLNM…TKEIRISGGR (230 aa). 3 residues coordinate [4Fe-4S] cluster: Cys-65, Cys-69, and Cys-72. Residues Cys-109, Cys-141, Cys-201, and Arg-271 each coordinate [2Fe-2S] cluster.

Belongs to the radical SAM superfamily. Biotin synthase family. In terms of assembly, homodimer. [4Fe-4S] cluster serves as cofactor. The cofactor is [2Fe-2S] cluster.

It carries out the reaction (4R,5S)-dethiobiotin + (sulfur carrier)-SH + 2 reduced [2Fe-2S]-[ferredoxin] + 2 S-adenosyl-L-methionine = (sulfur carrier)-H + biotin + 2 5'-deoxyadenosine + 2 L-methionine + 2 oxidized [2Fe-2S]-[ferredoxin]. It participates in cofactor biosynthesis; biotin biosynthesis; biotin from 7,8-diaminononanoate: step 2/2. Its function is as follows. Catalyzes the conversion of dethiobiotin (DTB) to biotin by the insertion of a sulfur atom into dethiobiotin via a radical-based mechanism. The protein is Biotin synthase of Bacillus licheniformis (strain ATCC 14580 / DSM 13 / JCM 2505 / CCUG 7422 / NBRC 12200 / NCIMB 9375 / NCTC 10341 / NRRL NRS-1264 / Gibson 46).